Consider the following 393-residue polypeptide: Phospho-N-acetylmuramoyl-pentapeptide-transferase (393 aa).

10 consecutive transmembrane segments (helical) span residues 29-49 (RAVM…PWVI), 75-95 (TPTM…LLWF), 101-121 (FVWV…VDDW), 138-158 (YLWQ…SVSE), 194-214 (VSYP…IVGA), 226-246 (GLAI…AYVT), 263-283 (AGEL…FLWF), 290-310 (VFMG…IAVI), 315-335 (IVLG…MAQV), and 370-390 (QVVV…LSTL).

This sequence belongs to the glycosyltransferase 4 family. MraY subfamily. Requires Mg(2+) as cofactor.

Its subcellular location is the cell inner membrane. The catalysed reaction is UDP-N-acetyl-alpha-D-muramoyl-L-alanyl-gamma-D-glutamyl-meso-2,6-diaminopimeloyl-D-alanyl-D-alanine + di-trans,octa-cis-undecaprenyl phosphate = di-trans,octa-cis-undecaprenyl diphospho-N-acetyl-alpha-D-muramoyl-L-alanyl-D-glutamyl-meso-2,6-diaminopimeloyl-D-alanyl-D-alanine + UMP. It participates in cell wall biogenesis; peptidoglycan biosynthesis. In terms of biological role, catalyzes the initial step of the lipid cycle reactions in the biosynthesis of the cell wall peptidoglycan: transfers peptidoglycan precursor phospho-MurNAc-pentapeptide from UDP-MurNAc-pentapeptide onto the lipid carrier undecaprenyl phosphate, yielding undecaprenyl-pyrophosphoryl-MurNAc-pentapeptide, known as lipid I. The polypeptide is Phospho-N-acetylmuramoyl-pentapeptide-transferase (Leptothrix cholodnii (strain ATCC 51168 / LMG 8142 / SP-6) (Leptothrix discophora (strain SP-6))).